Consider the following 297-residue polypeptide: uncharacterized protein (297 aa).

Positions 175-199 are disordered; the sequence is VLPTNRNNPVRSNVDIKPVNPPSSK. Over residues 176–185 the composition is skewed to polar residues; that stretch reads LPTNRNNPVR. The N-linked (GlcNAc...) asparagine; by host glycan is linked to N269. Residues 277-297 traverse the membrane as a helical segment; that stretch reads LFGSPVLLICVASLLLLIIIL.

Belongs to the ascovirus HvAV ORF18 family.

The protein localises to the membrane. This is an uncharacterized protein from Noctuidae (owlet moths).